The chain runs to 607 residues: DNA mismatch repair protein MutL (607 aa).

This sequence belongs to the DNA mismatch repair MutL/HexB family.

This protein is involved in the repair of mismatches in DNA. It is required for dam-dependent methyl-directed DNA mismatch repair. May act as a 'molecular matchmaker', a protein that promotes the formation of a stable complex between two or more DNA-binding proteins in an ATP-dependent manner without itself being part of a final effector complex. This Gemmatimonas aurantiaca (strain DSM 14586 / JCM 11422 / NBRC 100505 / T-27) protein is DNA mismatch repair protein MutL.